Reading from the N-terminus, the 292-residue chain is E3 ubiquitin-protein ligase RNF144A (292 aa).

A TRIAD supradomain region spans residues 16 to 236; the sequence is PLVSCKLCLG…YDKGPCRNKL (221 aa). Zn(2+) is bound by residues Cys20, Cys23, Cys43, Cys46, Cys111, Cys116, Cys135, Cys138, Cys143, Cys146, His151, Cys156, Cys185, and Cys188. The segment at 20–70 adopts an RING-type 1 zinc-finger fold; sequence CKLCLGEYPVEQMTTIAQCQCIFCTLCLKQYVELLIKEGLETAISCPDAAC. The IBR-type zinc finger occupies 91–156; sequence QRYKKLQFER…KASWHPGQGC (66 aa). An RING-type 2; atypical zinc finger spans residues 185–214; it reads CPKCKVYIERDEGCAQMMCKNCKHAFCWYC. Cys198 is an active-site residue. Zn(2+)-binding residues include Cys203, Cys206, Cys211, Cys214, His226, and Cys232. A helical transmembrane segment spans residues 250–270; the sequence is VVGIFAGFGLLLLVASPFLLL.

The protein belongs to the RBR family. RNF144 subfamily. Self-associates. Interacts with UBE2L3. Post-translationally, auto-ubiquitinated.

Its subcellular location is the cell membrane. It localises to the cytoplasmic vesicle membrane. The protein resides in the endosome membrane. The protein localises to the endoplasmic reticulum membrane. The catalysed reaction is [E2 ubiquitin-conjugating enzyme]-S-ubiquitinyl-L-cysteine + [acceptor protein]-L-lysine = [E2 ubiquitin-conjugating enzyme]-L-cysteine + [acceptor protein]-N(6)-ubiquitinyl-L-lysine.. Its pathway is protein modification; protein ubiquitination. E3 ubiquitin-protein ligase which accepts ubiquitin from E2 ubiquitin-conjugating enzymes UBE2L3 and UBE2L6 in the form of a thioester and then directly transfers the ubiquitin to targeted substrates. Mediates the ubiquitination and degradation of the DNA damage kinase PRKDC during DNA damage. Positively regulates DNA virus or exogenous cytosolic DNA-triggered innate immune response by mediating STING1 ubiquitination and increasing its 'Lys-6'-linked ubiquitination and translocation from the endoplasmic reticulum to the Golgi leading to downstream signaling pathways. Plays a positive role in EGF-dependent cell proliferation by prolonging EGF/EGFR signaling during EGF stimulation through EGFR ubiquitination. Increases ERK activity independently of EGFR signaling by promoting polyubiquitination and subsequent degradation of VRK3 in the cytosol. The protein is E3 ubiquitin-protein ligase RNF144A (RNF144A) of Homo sapiens (Human).